The following is a 232-amino-acid chain: Large ribosomal subunit protein uL1 (232 aa).

The protein belongs to the universal ribosomal protein uL1 family. In terms of assembly, part of the 50S ribosomal subunit.

Functionally, binds directly to 23S rRNA. The L1 stalk is quite mobile in the ribosome, and is involved in E site tRNA release. In terms of biological role, protein L1 is also a translational repressor protein, it controls the translation of the L11 operon by binding to its mRNA. This is Large ribosomal subunit protein uL1 from Variovorax paradoxus (strain S110).